Consider the following 773-residue polypeptide: Circadian clock protein PASD1 (773 aa).

In terms of domain architecture, PAS spans 30–102 (YDYFNQVTLQ…IILKFPLLNS (73 aa)). A disordered region spans residues 313–361 (SVDQEGPMDQQDPENPVAPLDQAGLMDPVDPEDSVDLGAAGASAQPLQP). The segment at 365–412 (VAYDIISQELELMKKLKEQLEERTWLLHDAIQNQQNALELMMDHLQKQ) is necessary for transcriptional repression. Positions 365–412 (VAYDIISQELELMKKLKEQLEERTWLLHDAIQNQQNALELMMDHLQKQ) form a coiled coil. Disordered regions lie at residues 427 to 448 (SEAV…PLPH), 506 to 569 (QRKV…QLQE), and 732 to 773 (GVEG…NKPC). The stretch at 475–553 (VAFNQQQLVQ…QERKKWQGQM (79 aa)) forms a coiled coil. The span at 506–536 (QRKVQKQKKMQEKKKLQEQKMQEKKKLQEQR) shows a compositional bias: basic and acidic residues.

In terms of assembly, interacts with the CLOCK-BMAL1 heterodimer; this interaction inhibits CLOCK-BMAL1 transcriptional activation and suppress circadian timekeeping. Interacts with BMAL1. As to expression, testis-specific. Expressed in a broad range of cancer cells, including melanoma, lung cancer, and breast cancer (at protein level). Testis-specific. Found in histologically normal tissues from patients with uterus, lung and small intestine cancers. Widespread expression seen in solid tumors and diffuse large B-cell lymphoma (DLBCL)-derived cell lines. Isoform 2 is expressed in all DLBCL-derived cell lines, while isoform 1 is preferentially expressed in cell lines derived from non-germinal center DLBCL.

It localises to the nucleus. In terms of biological role, functions as a suppressor of the biological clock that drives the daily circadian rhythms of cells throughout the body. Acts as a nuclear repressor of the CLOCK-BMAL1 heterodimer-mediated transcriptional activation of the core clock components. Inhibits circadian clock function in cancer cells, when overexpressed. The chain is Circadian clock protein PASD1 from Homo sapiens (Human).